The chain runs to 497 residues: Cytochrome P450 2D6 (497 aa).

Substrate is bound at residue aspartate 301. Cysteine 443 lines the heme pocket.

This sequence belongs to the cytochrome P450 family. Requires heme as cofactor.

It is found in the endoplasmic reticulum membrane. The protein localises to the microsome membrane. It catalyses the reaction (5Z,8Z,11Z,14Z)-eicosatetraenoate + reduced [NADPH--hemoprotein reductase] + O2 = (8R,9S)-epoxy-(5Z,11Z,14Z)-eicosatrienoate + oxidized [NADPH--hemoprotein reductase] + H2O + H(+). The enzyme catalyses (5Z,8Z,11Z,14Z)-eicosatetraenoate + reduced [NADPH--hemoprotein reductase] + O2 = (11R,12S)-epoxy-(5Z,8Z,14Z)-eicosatrienoate + oxidized [NADPH--hemoprotein reductase] + H2O + H(+). The catalysed reaction is (5Z,8Z,11Z,14Z)-eicosatetraenoate + reduced [NADPH--hemoprotein reductase] + O2 = (14S,15R)-epoxy-(5Z,8Z,11Z)-eicosatrienoate + oxidized [NADPH--hemoprotein reductase] + H2O + H(+). It carries out the reaction N-(5Z,8Z,11Z,14Z-eicosatetraenoyl)-ethanolamine + reduced [NADPH--hemoprotein reductase] + O2 = N-(8,9-epoxy-5Z,11Z,14Z-eicosatrienoyl)-ethanolamine + oxidized [NADPH--hemoprotein reductase] + H2O + H(+). It catalyses the reaction N-(5Z,8Z,11Z,14Z-eicosatetraenoyl)-ethanolamine + reduced [NADPH--hemoprotein reductase] + O2 = N-(11,12-epoxy-5Z,8Z,14Z-eicosatrienoyl)-ethanolamine + oxidized [NADPH--hemoprotein reductase] + H2O + H(+). The enzyme catalyses N-(5Z,8Z,11Z,14Z-eicosatetraenoyl)-ethanolamine + reduced [NADPH--hemoprotein reductase] + O2 = N-(14,15-epoxy-5Z,8Z,11Z-eicosatrienoyl)-ethanolamine + oxidized [NADPH--hemoprotein reductase] + H2O + H(+). The catalysed reaction is N-(5Z,8Z,11Z,14Z-eicosatetraenoyl)-ethanolamine + reduced [NADPH--hemoprotein reductase] + O2 = N-(20-hydroxy-5Z,8Z,11Z,14Z-eicosatetraenoyl)-ethanolamine + oxidized [NADPH--hemoprotein reductase] + H2O + H(+). It carries out the reaction (5Z,8Z,11Z,14Z,17Z)-eicosapentaenoate + reduced [NADPH--hemoprotein reductase] + O2 = (17S,18R)-epoxy-(5Z,8Z,11Z,14Z)-eicosatetraenoate + oxidized [NADPH--hemoprotein reductase] + H2O + H(+). It catalyses the reaction (4Z,7Z,10Z,13Z,16Z,19Z)-docosahexaenoate + reduced [NADPH--hemoprotein reductase] + O2 = (19R,20S)-epoxy-(4Z,7Z,10Z,13Z,16Z)-docosapentaenoate + oxidized [NADPH--hemoprotein reductase] + H2O + H(+). The enzyme catalyses (4Z,7Z,10Z,13Z,16Z,19Z)-docosahexaenoate + reduced [NADPH--hemoprotein reductase] + O2 = (19S,20R)-epoxy-(4Z,7Z,10Z,13Z,16Z)-docosapentaenoate + oxidized [NADPH--hemoprotein reductase] + H2O + H(+). The catalysed reaction is cholesterol + reduced [NADPH--hemoprotein reductase] + O2 = 25-hydroxycholesterol + oxidized [NADPH--hemoprotein reductase] + H2O + H(+). It carries out the reaction all-trans-retinol + reduced [NADPH--hemoprotein reductase] + O2 = all-trans-retinal + oxidized [NADPH--hemoprotein reductase] + 2 H2O + H(+). The protein operates within cofactor metabolism; retinol metabolism. It participates in lipid metabolism; fatty acid metabolism. Its pathway is steroid metabolism; cholesterol metabolism. In terms of biological role, a cytochrome P450 monooxygenase involved in the metabolism of fatty acids, steroids and retinoids. Mechanistically, uses molecular oxygen inserting one oxygen atom into a substrate, and reducing the second into a water molecule, with two electrons provided by NADPH via cytochrome P450 reductase (NADPH--hemoprotein reductase). Catalyzes the epoxidation of double bonds of polyunsaturated fatty acids (PUFA). Metabolizes endocannabinoid arachidonoylethanolamide (anandamide) to 20-hydroxyeicosatetraenoic acid ethanolamide (20-HETE-EA) and 8,9-, 11,12-, and 14,15-epoxyeicosatrienoic acid ethanolamides (EpETrE-EAs), potentially modulating endocannabinoid system signaling. Catalyzes the hydroxylation of carbon-hydrogen bonds. Metabolizes cholesterol toward 25-hydroxycholesterol, a physiological regulator of cellular cholesterol homeostasis. Catalyzes the oxidative transformations of all-trans retinol to all-trans retinal, a precursor for the active form all-trans-retinoic acid. Also involved in the oxidative metabolism of drugs such as antiarrhythmics, adrenoceptor antagonists, and tricyclic antidepressants. The protein is Cytochrome P450 2D6 (CYP2D6) of Pan troglodytes (Chimpanzee).